A 519-amino-acid chain; its full sequence is Histidine--tRNA ligase (519 aa).

Belongs to the class-II aminoacyl-tRNA synthetase family. Homodimer.

It is found in the cytoplasm. It catalyses the reaction tRNA(His) + L-histidine + ATP = L-histidyl-tRNA(His) + AMP + diphosphate + H(+). This is Histidine--tRNA ligase from Rhodopseudomonas palustris (strain BisB18).